The primary structure comprises 125 residues: Steroid Delta-isomerase (125 aa).

Y14 functions as the Proton donor in the catalytic mechanism. D38 functions as the Proton acceptor in the catalytic mechanism. D99 contributes to the substrate binding site.

In terms of assembly, homodimer.

The enzyme catalyses a 3-oxo-Delta(5)-steroid = a 3-oxo-Delta(4)-steroid. In Comamonas testosteroni (Pseudomonas testosteroni), this protein is Steroid Delta-isomerase (ksi).